Reading from the N-terminus, the 343-residue chain is MFANVGFRTLRVSRGPLYGSCSQIISFSKRTFYSSAKSGYQSNNSHGDAYSSGSQSGPFTYKTAVAFQPKDRDDLIYQKLKDSIRSPTGEDNYFVTSNNVHDIFAGVADGVGGWAEHGYDSSAISRELCKKMDEISTALAENSSKETLLTPKKIIGAAYAKIRDEKVVKVGGTTAIVAHFPSNGKLEVANLGDSWCGVFRDSKLVFQTKFQTVGFNAPYQLSIIPEEMLKEAERRGSKYILNTPRDADEYSFQLKKKDIIILATDGVTDNIATDDIELFLKDNAARTNDELQLLSQKFVDNVVSLSKDPNYPSVFAQEISKLTGKNYSGGKEDDITVVVVRVD.

The N-terminal 39 residues, 1 to 39, are a transit peptide targeting the mitochondrion; the sequence is MFANVGFRTLRVSRGPLYGSCSQIISFSKRTFYSSAKSG. One can recognise a PPM-type phosphatase domain in the interval 76-342; that stretch reads IYQKLKDSIR…DDITVVVVRV (267 aa). Asp-109, Gly-110, and Asp-265 together coordinate Mn(2+).

Requires Mg(2+) as cofactor. It depends on Mn(2+) as a cofactor.

It is found in the mitochondrion. It carries out the reaction O-phospho-L-seryl-[protein] + H2O = L-seryl-[protein] + phosphate. It catalyses the reaction O-phospho-L-threonyl-[protein] + H2O = L-threonyl-[protein] + phosphate. Its function is as follows. Protein phosphatase which positively regulates biosynthesis of the ubiquinone, coenzyme Q. Dephosphorylates and activates the ubiquinone biosynthesis protein CAT5/COQ7. Also dephosphorylates CIT1 on 'Ser-462', which leads to its activation. This Saccharomyces cerevisiae (strain ATCC 204508 / S288c) (Baker's yeast) protein is Protein phosphatase 2C homolog 7, mitochondrial (PTC7).